A 367-amino-acid chain; its full sequence is N6-succino-2-amino-2'-deoxyadenylate synthase (367 aa).

Catalysis depends on serine 17, which acts as the Proton acceptor. ATP contacts are provided by serine 17, threonine 18, glycine 19, lysine 20, and glycine 21. Serine 17 contributes to the dGMP binding site. Serine 17 lines the Mg(2+) pocket. Asparagine 43 serves as a coordination point for dGMP. Residues glycine 45, histidine 46, and threonine 47 each contribute to the ATP site. Glycine 45 is a Mg(2+) binding site. DGMP is bound by residues serine 128, threonine 129, and arginine 143. Glutamine 197 is an ATP binding site. Threonine 212 contributes to the dGMP binding site. Mg(2+) is bound at residue threonine 284. Positions 284, 285, and 290 each coordinate L-aspartate. Asparagine 315, asparagine 318, and glycine 354 together coordinate ATP.

It belongs to the Caudovirales PurZ family. Requires Mg(2+) as cofactor.

The enzyme catalyses dGMP + L-aspartate + ATP = (2S)-2-amino-2'-deoxyadenylo-succinate + ADP + phosphate + 2 H(+). It functions in the pathway purine metabolism. Functionally, involved in the synthesis of the atypical nucleotide dZTP (2-amino-2'-deoxyadenosine-5'-triphosphate). Catalyzes the condensation of aspartate with deoxyguanylate into dSMP (N6-succino-2-amino-2'-deoxyadenylate), which undergoes defumarylation and phosphorylation respectively by host PurB and guanylate/nucleoside diphosphate kinases to give dZTP. dZTP is integrated into the viral genome instead of adenine by the viral DNA polymerase. This Z-base probably completely replaces adenosine and forms a triple bond to the opposite T-base. The resulting non-standard viral DNA is called Z-genome. The chemically modified DNA is probably harder for the host bacteria to digest with nucleases or restriction enzymes. This is N6-succino-2-amino-2'-deoxyadenylate synthase from Salmonella phage PMBT28.